Consider the following 137-residue polypeptide: Nucleoside diphosphate kinase (137 aa).

Residues K9, F57, R85, T91, R102, and N112 each contribute to the ATP site. The Pros-phosphohistidine intermediate role is filled by H115.

It belongs to the NDK family. As to quaternary structure, homotetramer. Mg(2+) serves as cofactor.

It localises to the cytoplasm. It catalyses the reaction a 2'-deoxyribonucleoside 5'-diphosphate + ATP = a 2'-deoxyribonucleoside 5'-triphosphate + ADP. It carries out the reaction a ribonucleoside 5'-diphosphate + ATP = a ribonucleoside 5'-triphosphate + ADP. In terms of biological role, major role in the synthesis of nucleoside triphosphates other than ATP. The ATP gamma phosphate is transferred to the NDP beta phosphate via a ping-pong mechanism, using a phosphorylated active-site intermediate. In Thermus thermophilus (strain ATCC 27634 / DSM 579 / HB8), this protein is Nucleoside diphosphate kinase.